We begin with the raw amino-acid sequence, 304 residues long: ADP-ribosyl cyclase/cyclic ADP-ribose hydrolase 1 (304 aa).

The Cytoplasmic segment spans residues 1-21 (MANYEFSQVSGDRPGCRLSRK). A helical; Signal-anchor for type II membrane protein membrane pass occupies residues 22–44 (AQIGLGVGLLVLIALVVGIVVIL). Over 45 to 304 (LRPRSLLVWT…PEHPSCRLNT (260 aa)) the chain is Extracellular. Intrachain disulfides connect cysteine 70/cysteine 86, cysteine 103/cysteine 184, and cysteine 164/cysteine 177. A glycan (N-linked (GlcNAc...) asparagine) is linked at asparagine 104. The active site involves cysteine 123. The N-linked (GlcNAc...) asparagine glycan is linked to asparagine 124. Residue cysteine 205 is part of the active site. Asparagine 213 and asparagine 223 each carry an N-linked (GlcNAc...) asparagine glycan. Disulfide bonds link cysteine 258–cysteine 279 and cysteine 291–cysteine 300.

This sequence belongs to the ADP-ribosyl cyclase family. As to quaternary structure, homodimer.

It localises to the membrane. The enzyme catalyses NAD(+) = cyclic ADP-beta-D-ribose + nicotinamide + H(+). It catalyses the reaction nicotinate + NADP(+) = nicotinate-adenine dinucleotide phosphate + nicotinamide. The catalysed reaction is NAD(+) + H2O = ADP-D-ribose + nicotinamide + H(+). Synthesizes the second messengers cyclic ADP-ribose (cADPR) and nicotinate-adenine dinucleotide phosphate (NAADP), the former a second messenger for glucose-induced insulin secretion, the latter a Ca(2+) mobilizer. Also has cADPR hydrolase activity. This chain is ADP-ribosyl cyclase/cyclic ADP-ribose hydrolase 1 (Cd38), found in Mus musculus (Mouse).